A 329-amino-acid chain; its full sequence is Phenylalanine--tRNA ligase alpha subunit (329 aa).

Mg(2+) is bound at residue Glu-253.

Belongs to the class-II aminoacyl-tRNA synthetase family. Phe-tRNA synthetase alpha subunit type 1 subfamily. As to quaternary structure, tetramer of two alpha and two beta subunits. Requires Mg(2+) as cofactor.

The protein localises to the cytoplasm. The catalysed reaction is tRNA(Phe) + L-phenylalanine + ATP = L-phenylalanyl-tRNA(Phe) + AMP + diphosphate + H(+). The protein is Phenylalanine--tRNA ligase alpha subunit of Coxiella burnetii (strain CbuK_Q154) (Coxiella burnetii (strain Q154)).